Consider the following 454-residue polypeptide: Protein phosphatase 1F (454 aa).

Polar residues predominate over residues Met1–Met12. Positions Met1–Gln28 are disordered. One can recognise a PPM-type phosphatase domain in the interval Leu156–Leu413. Mn(2+) contacts are provided by Asp198, Gly199, Asp360, and Asp404. The tract at residues Leu419–Ser454 is disordered. Position 454 is a phosphoserine (Ser454).

This sequence belongs to the PP2C family. Associates with FEM1B. Requires Mg(2+) as cofactor. It depends on Mn(2+) as a cofactor.

The enzyme catalyses O-phospho-L-seryl-[protein] + H2O = L-seryl-[protein] + phosphate. The catalysed reaction is O-phospho-L-threonyl-[protein] + H2O = L-threonyl-[protein] + phosphate. Functionally, dephosphorylates and concomitantly deactivates CaM-kinase II activated upon autophosphorylation, and CaM-kinases IV and I activated upon phosphorylation by CaM-kinase kinase. Promotes apoptosis. This Homo sapiens (Human) protein is Protein phosphatase 1F (PPM1F).